Here is a 185-residue protein sequence, read N- to C-terminus: Elongation factor P (185 aa).

Belongs to the elongation factor P family.

The protein localises to the cytoplasm. The protein operates within protein biosynthesis; polypeptide chain elongation. Involved in peptide bond synthesis. Stimulates efficient translation and peptide-bond synthesis on native or reconstituted 70S ribosomes in vitro. Probably functions indirectly by altering the affinity of the ribosome for aminoacyl-tRNA, thus increasing their reactivity as acceptors for peptidyl transferase. This Streptococcus pyogenes serotype M28 (strain MGAS6180) protein is Elongation factor P.